Here is a 125-residue protein sequence, read N- to C-terminus: Large ribosomal subunit protein bL12 (125 aa).

Belongs to the bacterial ribosomal protein bL12 family. As to quaternary structure, homodimer. Part of the ribosomal stalk of the 50S ribosomal subunit. Forms a multimeric L10(L12)X complex, where L10 forms an elongated spine to which 2 to 4 L12 dimers bind in a sequential fashion. Binds GTP-bound translation factors.

In terms of biological role, forms part of the ribosomal stalk which helps the ribosome interact with GTP-bound translation factors. Is thus essential for accurate translation. The sequence is that of Large ribosomal subunit protein bL12 from Campylobacter lari (strain RM2100 / D67 / ATCC BAA-1060).